We begin with the raw amino-acid sequence, 285 residues long: Inositol monophosphatase 1 (285 aa).

Mg(2+) contacts are provided by Glu73, Asp93, Ile95, and Asp96. Position 73 (Glu73) interacts with substrate. Substrate-binding positions include 95-98 (IDGT), 198-200 (GTA), Glu217, and Asp224. Asp224 is a binding site for Mg(2+).

It belongs to the inositol monophosphatase superfamily. As to quaternary structure, homodimer. Requires Mg(2+) as cofactor.

The protein localises to the cytoplasm. It carries out the reaction a myo-inositol phosphate + H2O = myo-inositol + phosphate. The enzyme catalyses 1D-myo-inositol 1-phosphate + H2O = myo-inositol + phosphate. The catalysed reaction is 1D-myo-inositol 2-phosphate + H2O = myo-inositol + phosphate. It catalyses the reaction 1D-myo-inositol 3-phosphate + H2O = myo-inositol + phosphate. It carries out the reaction 1D-myo-inositol 4-phosphate + H2O = myo-inositol + phosphate. The enzyme catalyses 1D-myo-inositol 5-phosphate + H2O = myo-inositol + phosphate. The catalysed reaction is 1D-myo-inositol 6-phosphate + H2O = myo-inositol + phosphate. It catalyses the reaction scyllo-inositol 1-phosphate + H2O = scyllo-inositol + phosphate. It carries out the reaction alpha-D-galactose 1-phosphate + H2O = D-galactose + phosphate. The enzyme catalyses alpha-D-glucose 1-phosphate + H2O = D-glucose + phosphate. The catalysed reaction is D-glucose 6-phosphate + H2O = D-glucose + phosphate. It catalyses the reaction beta-D-fructose 1-phosphate + H2O = D-fructose + phosphate. It carries out the reaction glycerol 2-phosphate + H2O = glycerol + phosphate. The enzyme catalyses adenosine 2'-phosphate + H2O = adenosine + phosphate. It participates in polyol metabolism; myo-inositol biosynthesis; myo-inositol from D-glucose 6-phosphate: step 2/2. With respect to regulation, inhibited by Li(+), Ca(2+) and Mn(2+), but also by Mg(2+) at concentrations above 3 mM. Functionally, phosphatase involved in the dephosphorylation of myo-inositol monophosphate to generate myo-inositol. Is also able to dephosphorylate scyllo-inositol-phosphate, myo-inositol 1,4-diphosphate, scyllo-inositol-1,3-diphosphate and scyllo-inositol-1,4-diphosphate. Also dephosphorylates in vitro other sugar-phosphates including D-galactose-1-phosphate, glucose-1-phosphate, glucose-6-phosphate, fructose-1-phosphate, beta-glycerophosphate and 2'-AMP. Responsible for the provision of inositol required for synthesis of phosphatidylinositol and polyphosphoinositides, and involved in maintaining normal brain function. Has been implicated as the pharmacological target for lithium Li(+) action in brain. In Xenopus laevis (African clawed frog), this protein is Inositol monophosphatase 1 (impa1).